A 96-amino-acid chain; its full sequence is Ferredoxin-1 (96 aa).

A 2Fe-2S ferredoxin-type domain is found at 1-95; sequence MKVIINGKEF…DCDEIVIESE (95 aa). Residues cysteine 34, cysteine 39, cysteine 42, and cysteine 78 each coordinate [2Fe-2S] cluster. A disulfide bridge links cysteine 52 with cysteine 87.

It belongs to the 2Fe2S plant-type ferredoxin family. [2Fe-2S] cluster serves as cofactor.

Functionally, ferredoxins are iron-sulfur proteins that transfer electrons in a wide variety of metabolic reactions. This is Ferredoxin-1 (fdx1) from Aquifex aeolicus (strain VF5).